The primary structure comprises 238 residues: uncharacterized protein (238 aa).

This is an uncharacterized protein from Mycobacterium tuberculosis (strain ATCC 25618 / H37Rv).